The primary structure comprises 359 residues: Phosphoribosylformylglycinamidine cyclo-ligase (359 aa).

Belongs to the AIR synthase family.

It is found in the cytoplasm. It catalyses the reaction 2-formamido-N(1)-(5-O-phospho-beta-D-ribosyl)acetamidine + ATP = 5-amino-1-(5-phospho-beta-D-ribosyl)imidazole + ADP + phosphate + H(+). Its pathway is purine metabolism; IMP biosynthesis via de novo pathway; 5-amino-1-(5-phospho-D-ribosyl)imidazole from N(2)-formyl-N(1)-(5-phospho-D-ribosyl)glycinamide: step 2/2. The protein is Phosphoribosylformylglycinamidine cyclo-ligase of Brucella melitensis biotype 2 (strain ATCC 23457).